The chain runs to 138 residues: Small ribosomal subunit protein bS18m (138 aa).

It belongs to the bacterial ribosomal protein bS18 family. In terms of assembly, component of the mitochondrial small ribosomal subunit. Mature mitochondrial ribosomes consist of a small (37S) and a large (54S) subunit. The 37S subunit contains at least 33 different proteins and 1 molecule of RNA (15S). The 54S subunit contains at least 45 different proteins and 1 molecule of RNA (21S).

It is found in the mitochondrion. In Saccharomyces cerevisiae (strain RM11-1a) (Baker's yeast), this protein is Small ribosomal subunit protein bS18m (RSM18).